A 202-amino-acid polypeptide reads, in one-letter code: Protein-methionine-sulfoxide reductase heme-binding subunit MsrQ (202 aa).

The next 6 helical transmembrane spans lie at 8-28 (LAVF…AWIF), 42-62 (LGLG…LQKL), 75-95 (LGLW…VFIL), 110-130 (PYII…ITSN), 147-167 (LVYL…RADL), and 169-189 (EWTL…PSIA).

It belongs to the MsrQ family. In terms of assembly, heterodimer of a catalytic subunit (MsrP) and a heme-binding subunit (MsrQ). Requires FMN as cofactor. The cofactor is heme b.

Its subcellular location is the cell inner membrane. Functionally, part of the MsrPQ system that repairs oxidized periplasmic proteins containing methionine sulfoxide residues (Met-O), using respiratory chain electrons. Thus protects these proteins from oxidative-stress damage caused by reactive species of oxygen and chlorine generated by the host defense mechanisms. MsrPQ is essential for the maintenance of envelope integrity under bleach stress, rescuing a wide series of structurally unrelated periplasmic proteins from methionine oxidation. MsrQ provides electrons for reduction to the reductase catalytic subunit MsrP, using the quinone pool of the respiratory chain. The protein is Protein-methionine-sulfoxide reductase heme-binding subunit MsrQ of Pseudomonas aeruginosa (strain UCBPP-PA14).